The primary structure comprises 858 residues: Elongation factor 2 (858 aa).

The tr-type G domain occupies 17–362 (ANIRNMSVIA…MITIHLPSPV (346 aa)). A GTP-binding site is contributed by 26-33 (AHVDHGKS). Thr54 is subject to Phosphothreonine. Thr57 carries the phosphothreonine; by EEF2K modification. A Phosphothreonine modification is found at Thr59. An N6-succinyllysine modification is found at Lys152. GTP-binding positions include 158-161 (NKMD) and 216-218 (SGL). An N6-acetyllysine modification is found at Lys235. Lys239 is modified (N6-acetyllysine; alternate). Lys239 participates in a covalent cross-link: Glycyl lysine isopeptide (Lys-Gly) (interchain with G-Cter in SUMO1); alternate. The residue at position 265 (Tyr265) is a Phosphotyrosine; by CSK. Lys272 bears the N6-acetyllysine; alternate mark. N6-succinyllysine; alternate is present on Lys272. Lys275 is modified (N6-acetyllysine). Lys322 is covalently cross-linked (Glycyl lysine isopeptide (Lys-Gly) (interchain with G-Cter in SUMO)). Ser325 bears the Phosphoserine mark. Tyr373 carries the phosphotyrosine; by CSK modification. Thr435 carries the post-translational modification Phosphothreonine. N6-acetyllysine is present on residues Lys439 and Lys445. Residue Ser502 is modified to Phosphoserine. Residue Lys525 is modified to N6,N6,N6-trimethyllysine; by EEF2KMT. Residue Lys529 forms a Glycyl lysine isopeptide (Lys-Gly) (interchain with G-Cter in SUMO) linkage. N6-succinyllysine is present on Lys572. Ser595 bears the Phosphoserine; by CDK2 mark. Lys619 carries the N6-acetyllysine modification. His715 bears the Diphthamide mark.

This sequence belongs to the TRAFAC class translation factor GTPase superfamily. Classic translation factor GTPase family. EF-G/EF-2 subfamily. Binds to 80S ribosomes. Actively translating ribosomes show mutually exclusive binding of eIF5a (EIF5A or EIF5A2) and EEF2/eEF2. Interacts with SERBP1; interaction sequesters EEF2/eEF2 at the A-site of the ribosome, thereby blocking the interaction sites of the mRNA-tRNA complex, promoting ribosome stabilization and hibernation. Interacts with HABP4; interaction takes place at the A-site of hibernating ribosomes and promotes ribosome stabilization. Component of the mRNA surveillance SURF complex, at least composed of ERF1, ERF3 (ERF3A or ERF3B), EEF2, UPF1/RENT1, SMG1, SMG8 and SMG9. Interacts with RBPMS2. Phosphorylation by EF-2 kinase completely inactivates EF-2; it requires prior phosphorylation by CDK2 at Ser-595 during mitotic prometaphase. Phosphorylation by CSK promotes SUMOylation, proteolytic cleavage, and nuclear translocation if the C-terminal fragment. Post-translationally, diphthamide is 2-[3-carboxyamido-3-(trimethyl-ammonio)propyl]histidine. In terms of processing, ISGylated. Proteolytically processed at two sites following phosphorylation by CSK. Post-translationally, SUMOylated following phosphorylation by CSK, promotes proteolytic cleavage.

The protein localises to the cytoplasm. The protein resides in the nucleus. It carries out the reaction GTP + H2O = GDP + phosphate + H(+). Catalyzes the GTP-dependent ribosomal translocation step during translation elongation. During this step, the ribosome changes from the pre-translocational (PRE) to the post-translocational (POST) state as the newly formed A-site-bound peptidyl-tRNA and P-site-bound deacylated tRNA move to the P and E sites, respectively. Catalyzes the coordinated movement of the two tRNA molecules, the mRNA and conformational changes in the ribosome. In Mus musculus (Mouse), this protein is Elongation factor 2 (Eef2).